We begin with the raw amino-acid sequence, 420 residues long: Coiled-coil domain-containing protein 85C (420 aa).

Residue Ala2 is modified to N-acetylalanine. 2 coiled-coil regions span residues Glu26 to Cys92 and His122 to Ala165. Residues Ala165–Tyr271 are disordered. The segment covering Gly166 to Gly176 has biased composition (gly residues). Phosphoserine is present on Ser179. A compositionally biased stretch (low complexity) spans Ala185–Ala212. At Ser247 the chain carries Phosphoserine.

Belongs to the CCDC85 family. In terms of assembly, may interact with ARVCF, CTNND1, CTNND2 and PKP4. As to expression, predominantly expressed on the surface of the lateral ventricular walls of the developing cerebral cortex.

It is found in the cell junction. The protein localises to the tight junction. The protein resides in the adherens junction. May play a role in cell-cell adhesion and epithelium development through its interaction with proteins of the beta-catenin family. May play an important role in cortical development, especially in the maintenance of radial glia. The sequence is that of Coiled-coil domain-containing protein 85C (Ccdc85c) from Mus musculus (Mouse).